Reading from the N-terminus, the 310-residue chain is Lipoyl synthase (310 aa).

7 residues coordinate [4Fe-4S] cluster: cysteine 45, cysteine 50, cysteine 56, cysteine 71, cysteine 75, cysteine 78, and serine 285. Residues 57-274 (WTKKHATVMI…GSIARAKGFL (218 aa)) enclose the Radical SAM core domain.

This sequence belongs to the radical SAM superfamily. Lipoyl synthase family. The cofactor is [4Fe-4S] cluster.

It localises to the cytoplasm. It catalyses the reaction [[Fe-S] cluster scaffold protein carrying a second [4Fe-4S](2+) cluster] + N(6)-octanoyl-L-lysyl-[protein] + 2 oxidized [2Fe-2S]-[ferredoxin] + 2 S-adenosyl-L-methionine + 4 H(+) = [[Fe-S] cluster scaffold protein] + N(6)-[(R)-dihydrolipoyl]-L-lysyl-[protein] + 4 Fe(3+) + 2 hydrogen sulfide + 2 5'-deoxyadenosine + 2 L-methionine + 2 reduced [2Fe-2S]-[ferredoxin]. It functions in the pathway protein modification; protein lipoylation via endogenous pathway; protein N(6)-(lipoyl)lysine from octanoyl-[acyl-carrier-protein]: step 2/2. Catalyzes the radical-mediated insertion of two sulfur atoms into the C-6 and C-8 positions of the octanoyl moiety bound to the lipoyl domains of lipoate-dependent enzymes, thereby converting the octanoylated domains into lipoylated derivatives. The chain is Lipoyl synthase from Novosphingobium aromaticivorans (strain ATCC 700278 / DSM 12444 / CCUG 56034 / CIP 105152 / NBRC 16084 / F199).